Here is a 305-residue protein sequence, read N- to C-terminus: Heme A synthase (305 aa).

Residues M1–K6 are Cytoplasmic-facing. Residues V7–T27 traverse the membrane as a helical segment. At K28–R63 the chain is on the extracellular side. C35 and C42 are joined by a disulfide. E59 is a catalytic residue. H62 is a heme o binding site. The helical transmembrane segment at M64 to M84 threads the bilayer. The Cytoplasmic segment spans residues K85–P92. The chain crosses the membrane as a helical span at residues L93 to V113. The Extracellular segment spans residues W114–A122. The helical transmembrane segment at L123 to F143 threads the bilayer. H124 lines the heme o pocket. At E144 to L160 the chain is on the cytoplasmic side. The chain crosses the membrane as a helical span at residues R161–V181. The Extracellular portion of the chain corresponds to R182–Y212. Residues F213–F233 form a helical membrane-spanning segment. H214 contacts heme b. Residues R234 to R240 are Cytoplasmic-facing. A helical transmembrane segment spans residues V241 to A261. The Extracellular portion of the chain corresponds to L262–Y271. A helical transmembrane segment spans residues I272–L292. H276 contacts heme b. Over L293–K305 the chain is Cytoplasmic.

This sequence belongs to the COX15/CtaA family. Type 1 subfamily. In terms of assembly, interacts with CtaB. It depends on heme b as a cofactor.

It localises to the cell membrane. The catalysed reaction is Fe(II)-heme o + 2 A + H2O = Fe(II)-heme a + 2 AH2. It participates in porphyrin-containing compound metabolism; heme A biosynthesis; heme A from heme O: step 1/1. In terms of biological role, catalyzes the conversion of heme O to heme A by two successive hydroxylations of the methyl group at C8. The first hydroxylation forms heme I, the second hydroxylation results in an unstable dihydroxymethyl group, which spontaneously dehydrates, resulting in the formyl group of heme A. The chain is Heme A synthase from Listeria welshimeri serovar 6b (strain ATCC 35897 / DSM 20650 / CCUG 15529 / CIP 8149 / NCTC 11857 / SLCC 5334 / V8).